The primary structure comprises 238 residues: Orotidine 5'-phosphate decarboxylase (238 aa).

Residues Asp-10, Lys-32, 59–68, Thr-122, Arg-184, Gln-193, Gly-213, and Arg-214 each bind substrate; that span reads DLKLHDIPNT. The Proton donor role is filled by Lys-61.

The protein belongs to the OMP decarboxylase family. Type 1 subfamily. Homodimer.

The enzyme catalyses orotidine 5'-phosphate + H(+) = UMP + CO2. The protein operates within pyrimidine metabolism; UMP biosynthesis via de novo pathway; UMP from orotate: step 2/2. Catalyzes the decarboxylation of orotidine 5'-monophosphate (OMP) to uridine 5'-monophosphate (UMP). This is Orotidine 5'-phosphate decarboxylase from Bacillus anthracis (strain A0248).